Consider the following 376-residue polypeptide: uncharacterized protein (376 aa).

Residues 1–280 are Lumenal-facing; that stretch reads MPIPIIAHIA…RTPGFRRVVS (280 aa). Ile-66, Asp-115, Arg-178, Lys-233, Val-270, and Thr-272 together coordinate NADP(+). The active-site Lowers pKa of active site Tyr is the Lys-233. A helical membrane pass occupies residues 281 to 301; it reads FGKVWGLFLYLLLWPFWWLLL. Residues 302–376 lie on the Cytoplasmic side of the membrane; the sequence is KGTIHGAQSF…KKKKIKKSKK (75 aa).

This sequence belongs to the short-chain dehydrogenases/reductases (SDR) family.

It localises to the cytoplasm. It is found in the endoplasmic reticulum membrane. Its function is as follows. May be involved in lipid metabolism. This is an uncharacterized protein from Schizosaccharomyces pombe (strain 972 / ATCC 24843) (Fission yeast).